The chain runs to 174 residues: Crossover junction endodeoxyribonuclease RuvC (174 aa).

Residues Asp8, Glu67, and Asp139 contribute to the active site. Mg(2+) is bound by residues Asp8, Glu67, and Asp139.

It belongs to the RuvC family. As to quaternary structure, homodimer which binds Holliday junction (HJ) DNA. The HJ becomes 2-fold symmetrical on binding to RuvC with unstacked arms; it has a different conformation from HJ DNA in complex with RuvA. In the full resolvosome a probable DNA-RuvA(4)-RuvB(12)-RuvC(2) complex forms which resolves the HJ. Mg(2+) serves as cofactor.

It is found in the cytoplasm. It catalyses the reaction Endonucleolytic cleavage at a junction such as a reciprocal single-stranded crossover between two homologous DNA duplexes (Holliday junction).. Its function is as follows. The RuvA-RuvB-RuvC complex processes Holliday junction (HJ) DNA during genetic recombination and DNA repair. Endonuclease that resolves HJ intermediates. Cleaves cruciform DNA by making single-stranded nicks across the HJ at symmetrical positions within the homologous arms, yielding a 5'-phosphate and a 3'-hydroxyl group; requires a central core of homology in the junction. The consensus cleavage sequence is 5'-(A/T)TT(C/G)-3'. Cleavage occurs on the 3'-side of the TT dinucleotide at the point of strand exchange. HJ branch migration catalyzed by RuvA-RuvB allows RuvC to scan DNA until it finds its consensus sequence, where it cleaves and resolves the cruciform DNA. The chain is Crossover junction endodeoxyribonuclease RuvC from Stutzerimonas stutzeri (strain A1501) (Pseudomonas stutzeri).